The chain runs to 143 residues: Large ribosomal subunit protein uL16 (143 aa).

Belongs to the universal ribosomal protein uL16 family. As to quaternary structure, part of the 50S ribosomal subunit.

Functionally, binds 23S rRNA and is also seen to make contacts with the A and possibly P site tRNAs. This is Large ribosomal subunit protein uL16 from Tropheryma whipplei (strain TW08/27) (Whipple's bacillus).